The sequence spans 187 residues: UPF0669 protein C6orf120 homolog (187 aa).

A signal peptide spans 1–23; it reads MVEYWKRNFFMVLVLQAFYLANC. N-linked (GlcNAc...) asparagine glycosylation is present at Asn-47.

Belongs to the UPF0669 family.

Its subcellular location is the secreted. The sequence is that of UPF0669 protein C6orf120 homolog from Xenopus tropicalis (Western clawed frog).